A 42-amino-acid chain; its full sequence is MQDFQKYLSTAPVLATIWFIILAGLLIEINRFFPDALLVPMK.

A helical transmembrane segment spans residues Tyr7–Ile27.

It belongs to the PsaJ family.

It is found in the plastid. Its subcellular location is the chloroplast thylakoid membrane. Its function is as follows. May help in the organization of the PsaE and PsaF subunits. The sequence is that of Photosystem I reaction center subunit IX from Mesostigma viride (Green alga).